The following is a 338-amino-acid chain: Phosphate acyltransferase (338 aa).

Belongs to the PlsX family. In terms of assembly, homodimer. Probably interacts with PlsY.

Its subcellular location is the cytoplasm. The enzyme catalyses a fatty acyl-[ACP] + phosphate = an acyl phosphate + holo-[ACP]. The protein operates within lipid metabolism; phospholipid metabolism. Its function is as follows. Catalyzes the reversible formation of acyl-phosphate (acyl-PO(4)) from acyl-[acyl-carrier-protein] (acyl-ACP). This enzyme utilizes acyl-ACP as fatty acyl donor, but not acyl-CoA. This chain is Phosphate acyltransferase, found in Gloeobacter violaceus (strain ATCC 29082 / PCC 7421).